The following is a 556-amino-acid chain: Formate--tetrahydrofolate ligase (556 aa).

65–72 (TPAGEGKT) contacts ATP.

The protein belongs to the formate--tetrahydrofolate ligase family.

It catalyses the reaction (6S)-5,6,7,8-tetrahydrofolate + formate + ATP = (6R)-10-formyltetrahydrofolate + ADP + phosphate. The protein operates within one-carbon metabolism; tetrahydrofolate interconversion. This is Formate--tetrahydrofolate ligase from Ruminiclostridium cellulolyticum (strain ATCC 35319 / DSM 5812 / JCM 6584 / H10) (Clostridium cellulolyticum).